A 145-amino-acid polypeptide reads, in one-letter code: Basic phospholipase A2 cPt09 (145 aa).

A signal peptide spans Met-1–Thr-21. Positions Ile-22–Leu-27 are excised as a propeptide. 7 cysteine pairs are disulfide-bonded: Cys-38-Cys-98, Cys-54-Cys-144, Cys-56-Cys-72, Cys-71-Cys-125, Cys-78-Cys-118, Cys-87-Cys-111, and Cys-105-Cys-116. Positions 55, 57, and 59 each coordinate Ca(2+). His-75 is a catalytic residue. A Ca(2+)-binding site is contributed by Asp-76. Asp-119 is an active-site residue.

It belongs to the phospholipase A2 family. Group I subfamily. D49 sub-subfamily. The cofactor is Ca(2+). As to expression, expressed by the venom gland.

It is found in the secreted. It catalyses the reaction a 1,2-diacyl-sn-glycero-3-phosphocholine + H2O = a 1-acyl-sn-glycero-3-phosphocholine + a fatty acid + H(+). In terms of biological role, PLA2 catalyzes the calcium-dependent hydrolysis of the 2-acyl groups in 3-sn-phosphoglycerides. The protein is Basic phospholipase A2 cPt09 of Laticauda semifasciata (Black-banded sea krait).